Consider the following 554-residue polypeptide: Acetyl-S-ACP:malonate ACP transferase (554 aa).

It localises to the cytoplasm. The catalysed reaction is acetyl-[ACP] + malonate = malonyl-[ACP] + acetate. Alpha subunit of the biotin-independent and biotin-dependent malonate decarboxylase multienzyme complex (EC 4.1.1.88 and EC 7.2.4.4, respectively). Acts as an acyl-carrier protein (ACP) transferase component. This first step in malonate decarboxylation involves the exchange of an acetyl thioester residue bound to the activated ACP subunit for a malonyl thioester residue. Has a weak activity with acetyl-CoA as substrate. This is Acetyl-S-ACP:malonate ACP transferase (madA) from Malonomonas rubra.